The following is an 861-amino-acid chain: DNA topoisomerase 1 (861 aa).

The 139-residue stretch at 3 to 141 folds into the Toprim domain; it reads KSLVIVESPA…KFSRVVFNEI (139 aa). The Mg(2+) site is built by Glu9 and Asp110. The Topo IA-type catalytic domain maps to 157-572; it reads NMNRVHAQQA…DFFKKFSEQL (416 aa). Residues 191-196 are interaction with DNA; that stretch reads SAGRVQ. The O-(5'-phospho-DNA)-tyrosine intermediate role is filled by Tyr318. C4-type zinc fingers lie at residues 596–628, 658–685, and 707–732; these read CPIC…KKRC, CDIC…NPSC, and CEKC…NKIC.

It belongs to the type IA topoisomerase family. As to quaternary structure, monomer. It depends on Mg(2+) as a cofactor.

It catalyses the reaction ATP-independent breakage of single-stranded DNA, followed by passage and rejoining.. Its function is as follows. Releases the supercoiling and torsional tension of DNA, which is introduced during the DNA replication and transcription, by transiently cleaving and rejoining one strand of the DNA duplex. Introduces a single-strand break via transesterification at a target site in duplex DNA. The scissile phosphodiester is attacked by the catalytic tyrosine of the enzyme, resulting in the formation of a DNA-(5'-phosphotyrosyl)-enzyme intermediate and the expulsion of a 3'-OH DNA strand. The free DNA strand then undergoes passage around the unbroken strand, thus removing DNA supercoils. Finally, in the religation step, the DNA 3'-OH attacks the covalent intermediate to expel the active-site tyrosine and restore the DNA phosphodiester backbone. The polypeptide is DNA topoisomerase 1 (Buchnera aphidicola subsp. Acyrthosiphon pisum (strain APS) (Acyrthosiphon pisum symbiotic bacterium)).